The chain runs to 120 residues: UPF0145 protein UNCMA_30400 (120 aa).

Belongs to the UPF0145 family.

The protein is UPF0145 protein UNCMA_30400 of Methanocella arvoryzae (strain DSM 22066 / NBRC 105507 / MRE50).